Consider the following 214-residue polypeptide: MRKRISAIIMTLFMVFMSCNNGGPELKSDEVAKSDGTVLDLAKVSKKIKEASAFAASVKEVETLVKSVDELAKAIGKKIKNDGGLDTEAGQNGSLIAGVHSVVSAVKIKVGALETTSGISNELKTKITEVKSKAEAFLNKLKDGHTELGKKDASDDDTKKAIKKDNSDKTKGASELEALNTAVDALLKAAEGEVEAAIKELTAPVKAEKPSQNN.

Positions 1–18 are cleaved as a signal peptide; it reads MRKRISAIIMTLFMVFMS. A lipid anchor (N-palmitoyl cysteine) is attached at Cys-19. A lipid anchor (S-diacylglycerol cysteine) is attached at Cys-19. Positions 146-172 are disordered; sequence TELGKKDASDDDTKKAIKKDNSDKTKG.

Belongs to the variable small protein (Vsp) family.

The protein localises to the cell outer membrane. Functionally, the Vlp and Vsp proteins are antigenically distinct proteins, only one vlp or vsp gene is transcriptionally active at any one time. Switching between these genes is a mechanism of host immune response evasion. The sequence is that of Variable small protein 24 from Borrelia hermsii.